Here is a 1345-residue protein sequence, read N- to C-terminus: Aldehyde oxidase 2 (1345 aa).

A 2Fe-2S ferredoxin-type domain is found at 9–96; it reads DELEFFVNGK…GAAVTTVEGV (88 aa). Positions 48, 53, 56, and 78 each coordinate [2Fe-2S] cluster. A Mo-molybdopterin-binding site is contributed by Gln117. 4 residues coordinate [2Fe-2S] cluster: Cys118, Cys121, Cys153, and Cys155. Position 155 (Cys155) interacts with Mo-molybdopterin. The FAD-binding PCMH-type domain maps to 238–423; it reads FYGERITWIA…GSVYIPHSQK (186 aa). FAD is bound by residues 266–273, Ala347, Ser356, His360, Asp369, and Leu413; that span reads LISGNTAL. Mo-molybdopterin contacts are provided by residues 812–813, 1094–1097, Gln1209, and Leu1274; these read GF and ASVG. Glu1276 serves as the catalytic Proton acceptor; for azaheterocycle hydroxylase activity.

This sequence belongs to the xanthine dehydrogenase family. As to quaternary structure, homodimer. Requires [2Fe-2S] cluster as cofactor. It depends on FAD as a cofactor. The cofactor is Mo-molybdopterin.

It localises to the cytoplasm. It carries out the reaction an aldehyde + O2 + H2O = a carboxylate + H2O2 + H(+). Oxidase with broad substrate specificity, oxidizing aromatic azaheterocycles, such as phthalazine, as well as aldehydes, such as benzaldehyde and retinal. The chain is Aldehyde oxidase 2 (Aox2) from Rattus norvegicus (Rat).